We begin with the raw amino-acid sequence, 60 residues long: Large ribosomal subunit protein uL30 (60 aa).

Belongs to the universal ribosomal protein uL30 family. Part of the 50S ribosomal subunit.

This is Large ribosomal subunit protein uL30 from Idiomarina loihiensis (strain ATCC BAA-735 / DSM 15497 / L2-TR).